We begin with the raw amino-acid sequence, 328 residues long: Peroxidase 59 (328 aa).

The first 28 residues, 1 to 28 (MKTQTKVMGGHVLLTVFTLCMLCSGVRA), serve as a signal peptide directing secretion. A Pyrrolidone carboxylic acid modification is found at Gln-29. 4 cysteine pairs are disulfide-bonded: Cys-39–Cys-116, Cys-72–Cys-77, Cys-122–Cys-323, and Cys-200–Cys-232. His-70 acts as the Proton acceptor in catalysis. The Ca(2+) site is built by Asp-71, Val-74, Gly-76, Asp-78, and Ser-80. A substrate-binding site is contributed by Pro-163. The N-linked (GlcNAc...) asparagine glycan is linked to Asn-182. His-193 is a heme b binding site. Thr-194 serves as a coordination point for Ca(2+). 2 N-linked (GlcNAc...) asparagine glycosylation sites follow: Asn-209 and Asn-239. 4 residues coordinate Ca(2+): Asp-245, Thr-248, Thr-251, and Asp-253. N-linked (GlcNAc...) asparagine glycosylation is found at Asn-281 and Asn-310.

Belongs to the peroxidase family. Classical plant (class III) peroxidase subfamily. Heme b serves as cofactor. It depends on Ca(2+) as a cofactor. Slightly expressed in roots.

Its subcellular location is the secreted. It catalyses the reaction 2 a phenolic donor + H2O2 = 2 a phenolic radical donor + 2 H2O. Functionally, removal of H(2)O(2), oxidation of toxic reductants, biosynthesis and degradation of lignin, suberization, auxin catabolism, response to environmental stresses such as wounding, pathogen attack and oxidative stress. These functions might be dependent on each isozyme/isoform in each plant tissue. This Arabidopsis thaliana (Mouse-ear cress) protein is Peroxidase 59 (PER59).